We begin with the raw amino-acid sequence, 390 residues long: S-adenosylmethionine synthase 2 (390 aa).

E9 contributes to the Mg(2+) binding site. ATP is bound at residue H15. K(+) is bound at residue E43. Residues E56 and Q99 each contribute to the L-methionine site. ATP contacts are provided by residues 167–169 (DGK), 235–238 (SGRF), D246, 252–253 (RK), A269, K273, and K277. D246 is a binding site for L-methionine. K277 contributes to the L-methionine binding site.

Belongs to the AdoMet synthase family. Homotetramer. The cofactor is Mn(2+). Mg(2+) is required as a cofactor. Co(2+) serves as cofactor. Requires K(+) as cofactor.

The protein localises to the cytoplasm. The enzyme catalyses L-methionine + ATP + H2O = S-adenosyl-L-methionine + phosphate + diphosphate. Its pathway is amino-acid biosynthesis; S-adenosyl-L-methionine biosynthesis; S-adenosyl-L-methionine from L-methionine: step 1/1. Catalyzes the formation of S-adenosylmethionine from methionine and ATP. The reaction comprises two steps that are both catalyzed by the same enzyme: formation of S-adenosylmethionine (AdoMet) and triphosphate, and subsequent hydrolysis of the triphosphate. The sequence is that of S-adenosylmethionine synthase 2 (SAM2) from Petunia hybrida (Petunia).